We begin with the raw amino-acid sequence, 760 residues long: Translocation protein SEC63 homolog (760 aa).

Residues Met1–Thr14 are Lumenal-facing. Residues Phe15–Trp35 form a helical membrane-spanning segment. Residues Pro36–Asn69 lie on the Cytoplasmic side of the membrane. A helical membrane pass occupies residues Ile70–Ala90. Over Tyr91 to Asn188 the chain is Lumenal. One can recognise a J domain in the interval Asn104 to Gly165. Residues Ser189–Gly209 traverse the membrane as a helical segment. One can recognise an SEC63 1 domain in the interval Gly197 to Leu541. Topologically, residues Ser210 to Asp760 are cytoplasmic. The disordered stretch occupies residues Ala492–Gln617. Basic residues predominate over residues Lys518–Pro536. Thr537 is subject to Phosphothreonine. Basic and acidic residues predominate over residues Asn582–Asp608. The stretch at Ser597–Thr635 forms a coiled coil. The SEC63 2 domain maps to Pro637–Leu714. The segment at Lys720–Asp760 is disordered. A compositionally biased stretch (acidic residues) spans Ile733 to Asp760. Phosphoserine is present on residues Ser742 and Ser748.

As to quaternary structure, the ER translocon complex consists of channel-forming core components SEC61A1, SEC61B and SEC61G and different auxiliary components such as SEC62 and SEC63. As to expression, widely expressed, with high levels in the liver.

Its subcellular location is the endoplasmic reticulum membrane. Mediates cotranslational and post-translational transport of certain precursor polypeptides across endoplasmic reticulum (ER). Proposed to play an auxiliary role in recognition of precursors with short and apolar signal peptides. May cooperate with SEC62 and HSPA5/BiP to facilitate targeting of small presecretory proteins into the SEC61 channel-forming translocon complex, triggering channel opening for polypeptide translocation to the ER lumen. Required for efficient PKD1/Polycystin-1 biogenesis and trafficking to the plasma membrane of the primary cilia. The chain is Translocation protein SEC63 homolog from Homo sapiens (Human).